The following is a 220-amino-acid chain: Inner membrane-spanning protein YciB (220 aa).

The next 6 membrane-spanning stretches (helical) occupy residues 20–40 (EVPPLLKLALELGPLLVFFFA), 57–77 (IGAPIFLATALFMAATVIALA), 86–106 (LPIMPLVSGIVVLVFGALTLW), 123–143 (LFGGILLGGLFFGKSLLGYVF), 156–176 (KLTLRWALFFIFLAIVNEIVW), and 187–207 (FKVWGIMPITIVFTLLQMPLI).

This sequence belongs to the YciB family.

The protein localises to the cell inner membrane. Its function is as follows. Plays a role in cell envelope biogenesis, maintenance of cell envelope integrity and membrane homeostasis. This Brucella melitensis biotype 2 (strain ATCC 23457) protein is Inner membrane-spanning protein YciB.